The chain runs to 488 residues: Glutamyl-tRNA(Gln) amidotransferase subunit A (488 aa).

Active-site charge relay system residues include K77 and S152. S176 serves as the catalytic Acyl-ester intermediate.

This sequence belongs to the amidase family. GatA subfamily. In terms of assembly, heterotrimer of A, B and C subunits.

It carries out the reaction L-glutamyl-tRNA(Gln) + L-glutamine + ATP + H2O = L-glutaminyl-tRNA(Gln) + L-glutamate + ADP + phosphate + H(+). Functionally, allows the formation of correctly charged Gln-tRNA(Gln) through the transamidation of misacylated Glu-tRNA(Gln) in organisms which lack glutaminyl-tRNA synthetase. The reaction takes place in the presence of glutamine and ATP through an activated gamma-phospho-Glu-tRNA(Gln). This Streptococcus pneumoniae (strain ATCC 700669 / Spain 23F-1) protein is Glutamyl-tRNA(Gln) amidotransferase subunit A.